The following is a 63-amino-acid chain: Large ribosomal subunit protein bL28 (63 aa).

It belongs to the bacterial ribosomal protein bL28 family.

This is Large ribosomal subunit protein bL28 from Solibacter usitatus (strain Ellin6076).